The sequence spans 236 residues: SERTA domain-containing protein 1 (236 aa).

A disordered region spans residues 1-20 (MLSKGLKRKREEEEEKEPLA). In terms of domain architecture, SERTA spans 38 to 85 (PAVASSSLFDLSVLKLHHSLQQSEPDLRHLVLVVNTLRRIQASMAPAA). Residues 189–211 (PASEGLKPGPEDGPGKEEAPELD) are disordered. Residues 197–207 (GPEDGPGKEEA) show a composition bias toward basic and acidic residues.

Interacts with the PHD-bromodomain of TIF1, TRIM28/TIF1B and p300/CBP. Interacts with E2F1 and TFDP1; modulates transactivation activity of TFDP1/E2F complexes. Also interacts with CDK4. In terms of processing, polyubiquitinated, which promotes proteasomal degradation.

In terms of biological role, acts at E2F-responsive promoters as coregulator to integrate signals provided by PHD- and/or bromodomain-containing transcription factors. Stimulates E2F1/TFDP1 transcriptional activity. Renders the activity of cyclin D1/CDK4 resistant to the inhibitory effects of CDKN2A/p16INK4A. The protein is SERTA domain-containing protein 1 (SERTAD1) of Homo sapiens (Human).